The chain runs to 688 residues: Potassium-transporting ATPase ATP-binding subunit (688 aa).

Transmembrane regions (helical) follow at residues 37 to 57, 65 to 85, 219 to 239, and 262 to 282; these read FIVYIASILTTVLYVFSLFGI, ILFISILLWFTVLFANFAEAI, IALQILLVSLTIIFLVVTASL, and LALLVCLAPTTIGALLSAIGI. Residue aspartate 313 is the 4-aspartylphosphate intermediate of the active site. ATP-binding positions include aspartate 350, glutamate 354, 383 to 390, and lysine 401; that span reads FTAKTRMS. Mg(2+) contacts are provided by aspartate 524 and aspartate 528. Transmembrane regions (helical) follow at residues 586–606, 622–642, and 668–688; these read IANDIAKYFAIIPPLFIGLFP, AILSAVIYNAFIIIFLIPLAL, and IIAPFIAIKGIDILITMLGIV.

This sequence belongs to the cation transport ATPase (P-type) (TC 3.A.3) family. Type IA subfamily. The system is composed of three essential subunits: KdpA, KdpB and KdpC.

Its subcellular location is the cell membrane. It carries out the reaction K(+)(out) + ATP + H2O = K(+)(in) + ADP + phosphate + H(+). Part of the high-affinity ATP-driven potassium transport (or Kdp) system, which catalyzes the hydrolysis of ATP coupled with the electrogenic transport of potassium into the cytoplasm. This subunit is responsible for energy coupling to the transport system and for the release of the potassium ions to the cytoplasm. In Clostridium perfringens (strain ATCC 13124 / DSM 756 / JCM 1290 / NCIMB 6125 / NCTC 8237 / Type A), this protein is Potassium-transporting ATPase ATP-binding subunit.